Consider the following 54-residue polypeptide: uncharacterized protein (54 aa).

Residues 32–52 traverse the membrane as a helical segment; the sequence is LFSLLVLIILCFIDPILFYFI.

The protein resides in the host membrane. This is an uncharacterized protein from Cassava vein mosaic virus (CsVMV).